The chain runs to 287 residues: Polyamine aminopropyltransferase (287 aa).

Positions 9 to 242 (GSWLDEYQND…GIWSWTFASI (234 aa)) constitute a PABS domain. Position 36 (Gln36) interacts with S-methyl-5'-thioadenosine. Positions 67 and 91 each coordinate spermidine. S-methyl-5'-thioadenosine-binding positions include Glu111 and 143–144 (NG). Asp162 functions as the Proton acceptor in the catalytic mechanism. Pro169 is a binding site for S-methyl-5'-thioadenosine.

It belongs to the spermidine/spermine synthase family. As to quaternary structure, homodimer or homotetramer.

It is found in the cytoplasm. The enzyme catalyses S-adenosyl 3-(methylsulfanyl)propylamine + putrescine = S-methyl-5'-thioadenosine + spermidine + H(+). The protein operates within amine and polyamine biosynthesis; spermidine biosynthesis; spermidine from putrescine: step 1/1. Catalyzes the irreversible transfer of a propylamine group from the amino donor S-adenosylmethioninamine (decarboxy-AdoMet) to putrescine (1,4-diaminobutane) to yield spermidine. The sequence is that of Polyamine aminopropyltransferase from Prochlorococcus marinus (strain SARG / CCMP1375 / SS120).